Reading from the N-terminus, the 257-residue chain is Snake venom serine protease KN9 (257 aa).

A signal peptide spans 1–18; sequence MVLIRVLANLLILQLSYA. Positions 19–24 are excised as a propeptide; it reads QKSSEL. Residues 25-248 form the Peptidase S1 domain; that stretch reads VVGGDECNIN…HLDWIKSIIA (224 aa). 5 disulfides stabilise this stretch: Cys-31/Cys-162, Cys-49/Cys-65, Cys-141/Cys-209, Cys-173/Cys-188, and Cys-199/Cys-224. Catalysis depends on His-64, which acts as the Charge relay system. Asn-102 carries N-linked (GlcNAc...) asparagine glycosylation. Asp-109 (charge relay system) is an active-site residue. N-linked (GlcNAc...) asparagine glycosylation is found at Asn-120 and Asn-121. Ser-203 (charge relay system) is an active-site residue.

The protein belongs to the peptidase S1 family. Snake venom subfamily. Monomer. As to expression, expressed by the venom gland.

The protein localises to the secreted. In terms of biological role, snake venom serine protease that may act in the hemostasis system of the prey. This chain is Snake venom serine protease KN9, found in Trimeresurus stejnegeri (Chinese green tree viper).